A 524-amino-acid chain; its full sequence is Probable cytochrome P450 519C1 (524 aa).

A helical membrane pass occupies residues 1–21; it reads MNILLLIFYFLVCFLIFDFIK. Cys470 lines the heme pocket.

This sequence belongs to the cytochrome P450 family. It depends on heme as a cofactor.

Its subcellular location is the membrane. The sequence is that of Probable cytochrome P450 519C1 (cyp519C1) from Dictyostelium discoideum (Social amoeba).